A 333-amino-acid polypeptide reads, in one-letter code: Glycerol-3-phosphate dehydrogenase [NAD(P)+] (333 aa).

Residues Trp12, His31, and Lys105 each coordinate NADPH. 3 residues coordinate sn-glycerol 3-phosphate: Lys105, Gly134, and Ser136. An NADPH-binding site is contributed by Ala138. Lys189, Asp242, Ser252, Arg253, and Asn254 together coordinate sn-glycerol 3-phosphate. Lys189 acts as the Proton acceptor in catalysis. Residue Arg253 coordinates NADPH. Val278 and Glu280 together coordinate NADPH.

Belongs to the NAD-dependent glycerol-3-phosphate dehydrogenase family.

It is found in the cytoplasm. The catalysed reaction is sn-glycerol 3-phosphate + NAD(+) = dihydroxyacetone phosphate + NADH + H(+). The enzyme catalyses sn-glycerol 3-phosphate + NADP(+) = dihydroxyacetone phosphate + NADPH + H(+). Its pathway is membrane lipid metabolism; glycerophospholipid metabolism. Its function is as follows. Catalyzes the reduction of the glycolytic intermediate dihydroxyacetone phosphate (DHAP) to sn-glycerol 3-phosphate (G3P), the key precursor for phospholipid synthesis. This Brachyspira hyodysenteriae (strain ATCC 49526 / WA1) protein is Glycerol-3-phosphate dehydrogenase [NAD(P)+].